The sequence spans 142 residues: Holo-[acyl-carrier-protein] synthase (142 aa).

Mg(2+) is bound by residues Asp9 and Glu63.

Belongs to the P-Pant transferase superfamily. AcpS family. The cofactor is Mg(2+).

It localises to the cytoplasm. It carries out the reaction apo-[ACP] + CoA = holo-[ACP] + adenosine 3',5'-bisphosphate + H(+). Its function is as follows. Transfers the 4'-phosphopantetheine moiety from coenzyme A to a Ser of acyl-carrier-protein. This chain is Holo-[acyl-carrier-protein] synthase, found in Burkholderia lata (strain ATCC 17760 / DSM 23089 / LMG 22485 / NCIMB 9086 / R18194 / 383).